The following is a 132-amino-acid chain: Protein FAM174C (132 aa).

The first 26 residues, 1–26, serve as a signal peptide directing secretion; it reads MGPRVLQPPLLLLLLALLLAALPCGA. Positions 34–66 are disordered; sequence PAQVTLSPPPAVTNGSQPGAPHNSTHTRPPGAS. Positions 46-60 are enriched in polar residues; it reads TNGSQPGAPHNSTHT. N-linked (GlcNAc...) asparagine glycosylation occurs at Asn47. The chain crosses the membrane as a helical span at residues 73 to 93; that stretch reads SFYVILGFCGLTALYFLIRAF. Thr113 carries the phosphothreonine modification. The disordered stretch occupies residues 113–132; the sequence is TEMASLDSDEETVFESRNLR. A phosphoserine mark is found at Ser117 and Ser120.

It belongs to the FAM174 family.

The protein localises to the membrane. The polypeptide is Protein FAM174C (Homo sapiens (Human)).